We begin with the raw amino-acid sequence, 611 residues long: Creatine transporter (611 aa).

A helical transmembrane segment spans residues 45–65 (FIMSCVGFAVGLGNVWRFPYL). Residues 66 to 71 (CYKNGG) are Extracellular-facing. A helical transmembrane segment spans residues 72–92 (GVFLIPYLLVAVFGGIPIFFL). At 93 to 122 (EISLGQFMKAGGINAWNIAPLFKGLGYASM) the chain is on the cytoplasmic side. The chain crosses the membrane as a helical span at residues 123–143 (VIVFFCNTYYILVLTWSSFYL). Residues 144 to 207 (VQSFSSPLPW…LSSGLGDVGE (64 aa)) are Extracellular-facing. Residues Asn157 and Asn171 are each glycosylated (N-linked (GlcNAc...) asparagine). The chain crosses the membrane as a helical span at residues 208-228 (IGWELTLCLTATWMLVYFCIW). Topologically, residues 229 to 246 (KGVKTSGKVVYVTATFPY) are cytoplasmic. A helical transmembrane segment spans residues 247-267 (IILVILLVRGVTLHGAVQGIV). Residues 268 to 281 (YYLQPDWGKLGEAQ) lie on the Extracellular side of the membrane. A helical membrane pass occupies residues 282–302 (VWIDAGTQIFFSYAIGLGTLT). The Cytoplasmic segment spans residues 303–318 (ALGSYNQLHNDCYKDA). A helical transmembrane segment spans residues 319-339 (FILSLVNSATSFFAGLVVFSI). Over 340–371 (LGFMAVEEGVDISVVAESGPGLAFIAYPKAVT) the chain is Extracellular. Residues 372–392 (LMPFPQVWAVLFFIMLLCLGL) traverse the membrane as a helical segment. At 393–421 (GSQFVGVEGFVTAILDLWPSKFSFRYLRE) the chain is on the cytoplasmic side. The helical transmembrane segment at 422–442 (VVVAMVICLSFLIDLSMITEG) threads the bilayer. At 443–456 (GMYIFQIFDYYSAS) the chain is on the extracellular side. Residues 457–477 (GTTLLWTAFWECVAVAWVYGG) traverse the membrane as a helical segment. At 478 to 497 (DRYLDDLAWMLGYRPWALVK) the chain is on the cytoplasmic side. Residues 498-518 (WCWSVITPLVCMGIFTFHLVN) traverse the membrane as a helical segment. Residues 519-537 (YKPLTYNKTYTYPWWGEAI) lie on the Extracellular side of the membrane. An N-linked (GlcNAc...) asparagine glycan is attached at Asn525. A helical transmembrane segment spans residues 538–558 (GWCLALASMLCVPTTVLYSLS). At 559–611 (RGRGSLKERWRKLTTPVWASHHLAYKMAGAKINQPCEGVVSCEEKVVIFESVL) the chain is on the cytoplasmic side.

Belongs to the sodium:neurotransmitter symporter (SNF) (TC 2.A.22) family.

It is found in the membrane. Required for the uptake of creatine. In Torpedo marmorata (Marbled electric ray), this protein is Creatine transporter.